A 114-amino-acid polypeptide reads, in one-letter code: Small ribosomal subunit protein uS15 (114 aa).

This sequence belongs to the universal ribosomal protein uS15 family.

The sequence is that of Small ribosomal subunit protein uS15 (RpS13) from Musca domestica (House fly).